Consider the following 340-residue polypeptide: DnaJ homolog subfamily B member 1 (340 aa).

Residues 2 to 70 (GKDYYQTLGL…REIFDRYGEE (69 aa)) enclose the J domain. Phosphothreonine is present on threonine 307.

As to quaternary structure, interacts with DNAJC3. Interacts with HSF1 (via transactivation domain); this interaction results in the inhibition of heat shock- and HSF1-induced transcriptional activity during the attenuation and recovery phase period of the heat shock response. Interacts with BAG3.

The protein resides in the cytoplasm. The protein localises to the nucleus. It localises to the nucleolus. Interacts with HSP70 and can stimulate its ATPase activity. Stimulates the association between HSC70 and HIP. Negatively regulates heat shock-induced HSF1 transcriptional activity during the attenuation and recovery phase period of the heat shock response. Stimulates ATP hydrolysis and the folding of unfolded proteins mediated by HSPA1A/B (in vitro). This is DnaJ homolog subfamily B member 1 (Dnajb1) from Mus musculus (Mouse).